Here is a 116-residue protein sequence, read N- to C-terminus: Ribosome-binding factor A (116 aa).

The protein belongs to the RbfA family. In terms of assembly, monomer. Binds 30S ribosomal subunits, but not 50S ribosomal subunits or 70S ribosomes.

Its subcellular location is the cytoplasm. In terms of biological role, one of several proteins that assist in the late maturation steps of the functional core of the 30S ribosomal subunit. Associates with free 30S ribosomal subunits (but not with 30S subunits that are part of 70S ribosomes or polysomes). Required for efficient processing of 16S rRNA. May interact with the 5'-terminal helix region of 16S rRNA. The polypeptide is Ribosome-binding factor A (Ureaplasma parvum serovar 3 (strain ATCC 27815 / 27 / NCTC 11736)).